The sequence spans 668 residues: Trehalase (668 aa).

A disordered region spans residues 1 to 23 (MVLQQTEPTDGADRKASDGPLTV).

The protein belongs to the glycosyl hydrolase 15 family. Homomultimer of 20 or more subunits. Mg(2+) is required as a cofactor. Requires phosphate as cofactor.

The catalysed reaction is alpha,alpha-trehalose + H2O = alpha-D-glucose + beta-D-glucose. It functions in the pathway glycan degradation; trehalose degradation; D-glucose from alpha,alpha-trehalose: step 1/1. Inhibited by pyrophosphate and polyphosphates. Also competitively inhibited by validoxylamine and castanospermine, but not by trehazolin. Functionally, catalyzes the hydrolysis of alpha,alpha-trehalose into two molecules of D-glucose. Does not hydrolyze maltose, isomaltose, sucrose, cellobiose, p-nitrophenyl-alpha-D-glucopyranoside, and methyl-alpha-D-glucopyranoside. Is also inactive on alpha,beta-trehalose, beta,beta-trehalose, alpha,alpha-trehalose-6,6'-dibehenate, trehalulose, nigerose, and trehalose dimycolate. The chain is Trehalase from Mycolicibacterium smegmatis (strain ATCC 700084 / mc(2)155) (Mycobacterium smegmatis).